A 651-amino-acid polypeptide reads, in one-letter code: ATP synthase F(1) complex catalytic subunit beta, mitochondrial (651 aa).

Residues Met1 to Gly30 constitute a mitochondrion transit peptide. The ADP site is built by Gly259, Val260, Gly261, Lys262, Thr263, and Val264. Gly259 is a binding site for ATP. Gly259, Val260, Gly261, Lys262, and Thr263 together coordinate phosphate. Positions 261, 262, 263, and 264 each coordinate ATP. Thr263 contributes to the Mg(2+) binding site. Glu288 is a Mg(2+) binding site. Arg289 is an ATP binding site.

Belongs to the ATPase alpha/beta chains family. In terms of assembly, homotrimer. Component of the ATP synthase complex composed at least of ATP5F1A/subunit alpha, ATP5F1B/subunit beta, ATP5MC1/subunit c (homooctomer), MT-ATP6/subunit a, MT-ATP8/subunit 8, ATP5ME/subunit e, ATP5MF/subunit f, ATP5MG/subunit g, ATP5MK/subunit k, ATP5MJ/subunit j, ATP5F1C/subunit gamma, ATP5F1D/subunit delta, ATP5F1E/subunit epsilon, ATP5PF/subunit F6, ATP5PB/subunit b, ATP5PD/subunit d, ATP5PO/subunit OSCP. ATP synthase complex consists of a soluble F(1) head domain (subunits alpha(3) and beta(3)) - the catalytic core - and a membrane F(0) domain - the membrane proton channel (subunits c, a, 8, e, f, g, k and j). These two domains are linked by a central stalk (subunits gamma, delta, and epsilon) rotating inside the F1 region and a stationary peripheral stalk (subunits F6, b, d, and OSCP).

It is found in the mitochondrion inner membrane. The catalysed reaction is ATP + H2O + 4 H(+)(in) = ADP + phosphate + 5 H(+)(out). In terms of biological role, catalytic subunit beta, of the mitochondrial membrane ATP synthase complex (F(1)F(0) ATP synthase or Complex V) that produces ATP from ADP in the presence of a proton gradient across the membrane which is generated by electron transport complexes of the respiratory chain. ATP synthase complex consist of a soluble F(1) head domain - the catalytic core - and a membrane F(1) domain - the membrane proton channel. These two domains are linked by a central stalk rotating inside the F(1) region and a stationary peripheral stalk. During catalysis, ATP synthesis in the catalytic domain of F(1) is coupled via a rotary mechanism of the central stalk subunits to proton translocation. In vivo, can only synthesize ATP although its ATP hydrolase activity can be activated artificially in vitro. With the subunit alpha (ATP5F1A), forms the catalytic core in the F(1) domain. The sequence is that of ATP synthase F(1) complex catalytic subunit beta, mitochondrial from Dictyostelium discoideum (Social amoeba).